We begin with the raw amino-acid sequence, 388 residues long: MIKNPKVLILTAHYGNGHVQVAKTLEQTFRQKGIKDVIVCDLFGESHPVITDITKYLYLKSYTIGKELYRLFYYGVEKIYDKKIASWYANFGRKRLKLLLQAEKPDIVINTFPIIAVPELKKQTGISIPVYNVLTDFCVHKIWIHREVDRYFVATDHVKKVMVDIGVPAEQIVETGIPIRSSFELKINSDIIYNKYQLCKNKKILLIVAGAHGVLGSVKELCQSFMSVPDLQVVVVCGKNEALKQDLLGLQEKNPDALKVFGYVENIDELFRVTSCMITKPGGITLSEAAALQVPVILYKPVPGQENENAMYFERKGAAVVIRDDSEVFAKTEALLQDDMRLLQMKEAMKSIYRPEPADHIVDTILAENHVEPNHIPIKSPALAQSFT.

The protein belongs to the glycosyltransferase 28 family. UgtP subfamily.

It is found in the cell membrane. The catalysed reaction is a 1,2-diacyl-3-O-(beta-D-glucopyranosyl)-sn-glycerol + UDP-alpha-D-glucose = a 1,2-diacyl-3-O-(beta-D-Glc-(1-&gt;6)-beta-D-Glc)-sn-glycerol + UDP + H(+). It carries out the reaction a 1,2-diacyl-3-O-(beta-D-Glc-(1-&gt;6)-beta-D-Glc)-sn-glycerol + UDP-alpha-D-glucose = a 1,2-diacyl-3-O-(beta-D-Glc-(1-&gt;6)-beta-D-Glc-(1-&gt;6)-beta-D-Glc)-sn-glycerol + UDP + H(+). It catalyses the reaction a 1,2-diacyl-sn-glycerol + UDP-alpha-D-glucose = a 1,2-diacyl-3-O-(beta-D-glucopyranosyl)-sn-glycerol + UDP + H(+). The protein operates within glycolipid metabolism; diglucosyl-diacylglycerol biosynthesis. In terms of biological role, processive glucosyltransferase involved in the biosynthesis of both the bilayer- and non-bilayer-forming membrane glucolipids. Is able to successively transfer up to three glucosyl residues to diacylglycerol (DAG), thereby catalyzing the formation of beta-monoglucosyl-DAG (3-O-(beta-D-glucopyranosyl)-1,2-diacyl-sn-glycerol), beta-diglucosyl-DAG (3-O-(beta-D-glucopyranosyl-beta-(1-&gt;6)-D-glucopyranosyl)-1,2-diacyl-sn-glycerol) and beta-triglucosyl-DAG (3-O-(beta-D-glucopyranosyl-beta-(1-&gt;6)-D-glucopyranosyl-beta-(1-&gt;6)-D-glucopyranosyl)-1,2-diacyl-sn-glycerol). Beta-diglucosyl-DAG is the predominant glycolipid found in Bacillales and is also used as a membrane anchor for lipoteichoic acid (LTA). The chain is Processive diacylglycerol beta-glucosyltransferase from Bacillus cereus (strain AH187).